A 255-amino-acid chain; its full sequence is Uridylate kinase (255 aa).

Residue 22-25 (KLSG) coordinates ATP. Residues 30–35 (GNGGYG) form an involved in allosteric activation by GTP region. Gly64 provides a ligand contact to UMP. 2 residues coordinate ATP: Gly65 and Arg69. UMP is bound by residues Asp85 and 146-153 (TGNPFFTT). Residues Asn174, Tyr180, and Asp183 each coordinate ATP.

The protein belongs to the UMP kinase family. In terms of assembly, homohexamer.

Its subcellular location is the cytoplasm. It catalyses the reaction UMP + ATP = UDP + ADP. It participates in pyrimidine metabolism; CTP biosynthesis via de novo pathway; UDP from UMP (UMPK route): step 1/1. Allosterically activated by GTP. Inhibited by UTP. Its function is as follows. Catalyzes the reversible phosphorylation of UMP to UDP. In Rubrobacter xylanophilus (strain DSM 9941 / JCM 11954 / NBRC 16129 / PRD-1), this protein is Uridylate kinase.